The primary structure comprises 273 residues: 3-methyl-2-oxobutanoate hydroxymethyltransferase (273 aa).

Residues Asp53 and Asp92 each coordinate Mg(2+). 3-methyl-2-oxobutanoate contacts are provided by residues 53-54 (DS), Asp92, and Lys122. Residue Glu124 participates in Mg(2+) binding. Glu191 (proton acceptor) is an active-site residue.

This sequence belongs to the PanB family. As to quaternary structure, homodecamer; pentamer of dimers. Mg(2+) is required as a cofactor.

It is found in the cytoplasm. It catalyses the reaction 3-methyl-2-oxobutanoate + (6R)-5,10-methylene-5,6,7,8-tetrahydrofolate + H2O = 2-dehydropantoate + (6S)-5,6,7,8-tetrahydrofolate. It participates in cofactor biosynthesis; (R)-pantothenate biosynthesis; (R)-pantoate from 3-methyl-2-oxobutanoate: step 1/2. Functionally, catalyzes the reversible reaction in which hydroxymethyl group from 5,10-methylenetetrahydrofolate is transferred onto alpha-ketoisovalerate to form ketopantoate. This is 3-methyl-2-oxobutanoate hydroxymethyltransferase from Bacteroides thetaiotaomicron (strain ATCC 29148 / DSM 2079 / JCM 5827 / CCUG 10774 / NCTC 10582 / VPI-5482 / E50).